The primary structure comprises 669 residues: DNA ligase (669 aa).

NAD(+) contacts are provided by residues 34–38, 83–84, and Glu-114; these read DAEYD and SL. The active-site N6-AMP-lysine intermediate is Lys-116. NAD(+) contacts are provided by Arg-137, Glu-171, Lys-287, and Lys-311. Zn(2+) is bound by residues Cys-405, Cys-408, Cys-423, and Cys-428. The region spanning 591–669 is the BRCT domain; that stretch reads NVESYFAGKT…EERFLQELNK (79 aa).

It belongs to the NAD-dependent DNA ligase family. LigA subfamily. The cofactor is Mg(2+). Mn(2+) serves as cofactor.

It carries out the reaction NAD(+) + (deoxyribonucleotide)n-3'-hydroxyl + 5'-phospho-(deoxyribonucleotide)m = (deoxyribonucleotide)n+m + AMP + beta-nicotinamide D-nucleotide.. In terms of biological role, DNA ligase that catalyzes the formation of phosphodiester linkages between 5'-phosphoryl and 3'-hydroxyl groups in double-stranded DNA using NAD as a coenzyme and as the energy source for the reaction. It is essential for DNA replication and repair of damaged DNA. The sequence is that of DNA ligase from Bacillus cereus (strain AH820).